A 210-amino-acid polypeptide reads, in one-letter code: LexA repressor (210 aa).

Residues 29–49 (VREIGEAVDLSSTSTVHGHIS) constitute a DNA-binding region (H-T-H motif). Residues Ser-130 and Lys-168 each act as for autocatalytic cleavage activity in the active site.

The protein belongs to the peptidase S24 family. As to quaternary structure, homodimer.

The enzyme catalyses Hydrolysis of Ala-|-Gly bond in repressor LexA.. In terms of biological role, represses a number of genes involved in the response to DNA damage (SOS response), including recA and lexA. In the presence of single-stranded DNA, RecA interacts with LexA causing an autocatalytic cleavage which disrupts the DNA-binding part of LexA, leading to derepression of the SOS regulon and eventually DNA repair. The protein is LexA repressor of Lactiplantibacillus plantarum (strain ATCC BAA-793 / NCIMB 8826 / WCFS1) (Lactobacillus plantarum).